Here is a 1108-residue protein sequence, read N- to C-terminus: Retinal guanylyl cyclase 1 (1108 aa).

Positions 1–54 are cleaved as a signal peptide; it reads MSAWLLPAGGLPGAGFCVPARQSPSSFSRVLRWPRPGLPGLLLLLLLPSPSALS. Residues 55 to 465 are Extracellular-facing; it reads AVFKVGVLGP…PDVICNGGVE (411 aa). Cys108 and Cys136 are disulfide-bonded. A glycan (N-linked (GlcNAc...) asparagine) is linked at Asn300. A helical membrane pass occupies residues 466-490; sequence PGLVFVGFLLVIGMGLTGAFLAHYL. A Protein kinase domain is found at 491–811; it reads RHRLLHMQMA…DLTFDLFKSI (321 aa). Residues 491 to 1108 are Cytoplasmic-facing; sequence RHRLLHMQMA…KARPGQFTGK (618 aa). The Guanylate cyclase domain occupies 883–1013; the sequence is TLYFSDIVGF…DTVNTASRME (131 aa). The tract at residues 1069–1108 is disordered; the sequence is IPKPPDLQPGASNHGISLQEIPPERRKKLEKARPGQFTGK.

Belongs to the adenylyl cyclase class-4/guanylyl cyclase family. In terms of assembly, homodimer; requires homodimerization for guanylyl cyclase activity. Interacts (via C-terminus) with RD3 (via C-terminus); promotes the exit of GUCY2E from the endoplasmic reticulum and its trafficking to the photoreceptor outer segments. Interaction with RD3 negatively regulates GUCY2E guanylate cyclase activity. In terms of processing, there are 9 conserved cysteine residues in sensory guanylate cyclases, 6 in the extracellular domain, which may be involved in intra- or interchain disulfide bonds.

It localises to the photoreceptor outer segment membrane. The protein localises to the endoplasmic reticulum membrane. It carries out the reaction GTP = 3',5'-cyclic GMP + diphosphate. With respect to regulation, activated by GUCA1A when free calcium ions concentration is low, and inhibited by GUCA1A when free calcium ions concentration is high. Negatively regulated by RD3; RD3 inhibits the basal and GUCA1A-stimulated guanylate cyclase activity. In terms of biological role, catalyzes the synthesis of cyclic GMP (cGMP) in rods and cones of photoreceptors. Plays an essential role in phototransduction, by mediating cGMP replenishment. May also participate in the trafficking of membrane-asociated proteins to the photoreceptor outer segment membrane. The chain is Retinal guanylyl cyclase 1 (Gucy2e) from Mus musculus (Mouse).